We begin with the raw amino-acid sequence, 426 residues long: MFVNLTCLSEGNGSRGKALAESTQAELKTSWYLLGPAFVAAIAYVDPGNVAANVSSGAQFGYLQLWVVVVANVLAGLVQYLSAKLGLVTGQSLPQAISKQMSHPFRLGFWLQAELVAMATDVAEIVGGAIAFHILFRVSLLLGGVITGTVSLLLLMVKDRRGQLLFERVITGLLFVIVVGFTSSFFVATPSPEDMVNGLLPRFQGTESVLLAAAIIGATVMPHAVYLHSGLALDRHGHPHAGRSRRRLLRVTRLDVILAMTIAGIVNTAMLLVAAINLQHHQVTAYIEGTYTAIQDTLGATIAMLFAIGLLASSLASASVGAYAGALIMQGLLQRSIPMLIRRLITLCPAIAILALGFDPTRALVLSQIVLSFGIPFAVLPLVKLTNNRGLMGNDTNHPATTVLGWAVAILVSLLNVVLIYLTVTS.

The next 10 membrane-spanning stretches (helical) occupy residues 31–51 (WYLL…GNVA), 58–78 (AQFG…AGLV), 134–156 (ILFR…LLLM), 169–189 (VITG…FVAT), 208–228 (SVLL…VYLH), 256–276 (VILA…VAAI), 298–318 (LGAT…LASA), 337–357 (IPML…LALG), 363–383 (ALVL…LPLV), and 402–422 (TVLG…LIYL).

Belongs to the NRAMP family.

It is found in the cell membrane. Its function is as follows. H(+)-stimulated, divalent metal cation uptake system. This is Divalent metal cation transporter MntH from Mycobacterium leprae (strain TN).